We begin with the raw amino-acid sequence, 159 residues long: 6,7-dimethyl-8-ribityllumazine synthase (159 aa).

5-amino-6-(D-ribitylamino)uracil contacts are provided by residues Trp-26, 57-59, and 79-81; these read ALE and CVV. 84–85 contributes to the (2S)-2-hydroxy-3-oxobutyl phosphate binding site; that stretch reads GT. His-87 serves as the catalytic Proton donor. Asn-112 lines the 5-amino-6-(D-ribitylamino)uracil pocket. Arg-126 contacts (2S)-2-hydroxy-3-oxobutyl phosphate.

It belongs to the DMRL synthase family.

It carries out the reaction (2S)-2-hydroxy-3-oxobutyl phosphate + 5-amino-6-(D-ribitylamino)uracil = 6,7-dimethyl-8-(1-D-ribityl)lumazine + phosphate + 2 H2O + H(+). It participates in cofactor biosynthesis; riboflavin biosynthesis; riboflavin from 2-hydroxy-3-oxobutyl phosphate and 5-amino-6-(D-ribitylamino)uracil: step 1/2. In terms of biological role, catalyzes the formation of 6,7-dimethyl-8-ribityllumazine by condensation of 5-amino-6-(D-ribitylamino)uracil with 3,4-dihydroxy-2-butanone 4-phosphate. This is the penultimate step in the biosynthesis of riboflavin. In Corynebacterium glutamicum (strain ATCC 13032 / DSM 20300 / JCM 1318 / BCRC 11384 / CCUG 27702 / LMG 3730 / NBRC 12168 / NCIMB 10025 / NRRL B-2784 / 534), this protein is 6,7-dimethyl-8-ribityllumazine synthase.